A 520-amino-acid polypeptide reads, in one-letter code: Transcription factor MYB33 (520 aa).

Positions 1-24 are disordered; that stretch reads MSYTSTDSDHNESPAADDNGSDCR. HTH myb-type domains lie at 29–81 and 82–136; these read GHAL…ANHL and RPNL…KRRQ. DNA-binding regions (H-T-H motif) lie at residues 57–81 and 109–132; these read WNAV…ANHL and WARM…NTRI. Residues 331–342 are compositionally biased toward low complexity; that stretch reads SSSPPHSDLLDP. Disordered stretches follow at residues 331 to 359 and 426 to 447; these read SSSP…GEES and EMST…RKPL.

As to expression, mostly expressed in stems, shoot apices, flowers and floral shoot tips, and, to a lower extent, in roots (e.g. root tips), seedlings, leaves and siliques.

Its subcellular location is the nucleus. Transcriptional activator of alpha-amylase expression that binds to 5'-CAACTGTC-3' motif in target gene promoter. Positive regulator of abscisic acid (ABA) responses leading to growth arrest during seed germination. In vegetative tissues, inhibits growth by reducing cell proliferation. Promotes the expression of aleurone-related genes (e.g. CP1, CP, GASA1, BXL1 and BXL2) in seeds. Together with MYB65 and MYB101, promotes the programmed cell death (PCD) the vacuolation of protein storage vacuoles (PSVs) in the aleurone layers during seed germination. Binds to a GARE site (GA-response element) in the LEAFY promoter, essential for its gibberellic acid (GA)-mediated induction. Together with MYB65, facilitates anther and tapetum development. In Arabidopsis thaliana (Mouse-ear cress), this protein is Transcription factor MYB33.